Here is a 540-residue protein sequence, read N- to C-terminus: Chaperonin GroEL (540 aa).

Residues 29–32, 86–90, glycine 413, 476–478, and aspartate 492 each bind ATP; these read TIGP, DGTTT, and NAA. The disordered stretch occupies residues 520–540; sequence DKPEPESNNQMPATPGMGGMM.

This sequence belongs to the chaperonin (HSP60) family. In terms of assembly, forms a cylinder of 14 subunits composed of two heptameric rings stacked back-to-back. Interacts with the co-chaperonin GroES.

The protein localises to the cytoplasm. It carries out the reaction ATP + H2O + a folded polypeptide = ADP + phosphate + an unfolded polypeptide.. Together with its co-chaperonin GroES, plays an essential role in assisting protein folding. The GroEL-GroES system forms a nano-cage that allows encapsulation of the non-native substrate proteins and provides a physical environment optimized to promote and accelerate protein folding. This chain is Chaperonin GroEL, found in Ligilactobacillus salivarius (strain UCC118) (Lactobacillus salivarius).